A 377-amino-acid chain; its full sequence is Actin-related protein T2 (377 aa).

It belongs to the actin family.

The protein localises to the cytoplasm. It localises to the cytoskeleton. In Mus musculus (Mouse), this protein is Actin-related protein T2 (Actrt2).